A 115-amino-acid chain; its full sequence is Ribonuclease P protein component (115 aa).

The protein belongs to the RnpA family. As to quaternary structure, consists of a catalytic RNA component (M1 or rnpB) and a protein subunit.

It carries out the reaction Endonucleolytic cleavage of RNA, removing 5'-extranucleotides from tRNA precursor.. Functionally, RNaseP catalyzes the removal of the 5'-leader sequence from pre-tRNA to produce the mature 5'-terminus. It can also cleave other RNA substrates such as 4.5S RNA. The protein component plays an auxiliary but essential role in vivo by binding to the 5'-leader sequence and broadening the substrate specificity of the ribozyme. This Symbiobacterium thermophilum (strain DSM 24528 / JCM 14929 / IAM 14863 / T) protein is Ribonuclease P protein component.